The sequence spans 203 residues: ATP-dependent Clp protease proteolytic subunit 1 (203 aa).

Serine 103 (nucleophile) is an active-site residue. The active site involves histidine 128.

It belongs to the peptidase S14 family. As to quaternary structure, fourteen ClpP subunits assemble into 2 heptameric rings which stack back to back to give a disk-like structure with a central cavity, resembling the structure of eukaryotic proteasomes.

The protein resides in the cytoplasm. It catalyses the reaction Hydrolysis of proteins to small peptides in the presence of ATP and magnesium. alpha-casein is the usual test substrate. In the absence of ATP, only oligopeptides shorter than five residues are hydrolyzed (such as succinyl-Leu-Tyr-|-NHMec, and Leu-Tyr-Leu-|-Tyr-Trp, in which cleavage of the -Tyr-|-Leu- and -Tyr-|-Trp bonds also occurs).. Cleaves peptides in various proteins in a process that requires ATP hydrolysis. Has a chymotrypsin-like activity. Plays a major role in the degradation of misfolded proteins. The protein is ATP-dependent Clp protease proteolytic subunit 1 of Treponema pallidum (strain Nichols).